The chain runs to 87 residues: COMM domain-containing protein 6 (87 aa).

N-acetylmethionine is present on methionine 1. Residues 20-87 (QLIDFQWKLG…KEIAAVIETV (68 aa)) enclose the COMM domain.

It belongs to the COMM domain-containing protein 6 family. As to quaternary structure, component of the commander complex consisting of the CCC subcomplex and the retriever subcomplex. Component of the CCC (COMMD/CCDC22/CCDC93) subcomplex consisting of COMMD1, COMMD2, COMMD3, COMMD4, COMMD5, COMMD6, COMMD7, COMMD8, COMMD9, COMMD10, CCDC22 and CCDC93; within the complex forms a heterodimer with COMMD1. May form a homodimer with isoform 1. Interacts with RELA, RELB, NFKB1/p105. Does not interact with NFKBIB. Interacts with CCDC22, CCDC93, SCNN1B, CUL4A.

Its subcellular location is the nucleus. The protein localises to the cytoplasm. In terms of biological role, scaffold protein in the commander complex that is essential for endosomal recycling of transmembrane cargos; the commander complex is composed of the CCC subcomplex and the retriever subcomplex. May modulate activity of cullin-RING E3 ubiquitin ligase (CRL) complexes. Down-regulates activation of NF-kappa-B. Inhibits TNF-induced NFKB1 activation. This Mus musculus (Mouse) protein is COMM domain-containing protein 6 (Commd6).